A 1138-amino-acid polypeptide reads, in one-letter code: Nuclear pore complex-interacting protein family member B4 (1138 aa).

The helical transmembrane segment at 63 to 87 (VIIAFPTSYKVVITLWIVYLWVSLL) threads the bilayer. 3 disordered regions span residues 241–263 (NRMG…SLSL), 291–620 (TPLP…NIKT), and 873–1138 (ERLR…RRLS). Residues 252-262 (QQHSITDNSLS) are compositionally biased toward polar residues. Positions 349–359 (PLPPSALPSAP) are enriched in pro residues. 8 stretches are compositionally biased toward basic and acidic residues: residues 406–416 (DNIKTPAERLR), 448–458 (DNIKTPAERLR), 490–500 (DNIKTPAERLR), 532–542 (DNIKTPAERLR), 574–584 (DNIKTPAERLR), 908–918 (DNIKTPAERLR), 950–960 (DNIKTPAERLR), and 992–1002 (DNIKTPAERLR).

Belongs to the NPIP family.

Its subcellular location is the membrane. The polypeptide is Nuclear pore complex-interacting protein family member B4 (NPIPB4) (Homo sapiens (Human)).